The primary structure comprises 216 residues: Pathogenicity-related ORF2 (216 aa).

4 helical membrane passes run 6–26 (VGSL…AAMV), 55–75 (LNGV…MEAF), 157–177 (IGFL…NALM), and 193–213 (FKLL…GLVL).

Belongs to the FliP/MopC/SpaP family.

It is found in the cell membrane. Important for pathogenicity. This Xanthomonas campestris pv. glycines protein is Pathogenicity-related ORF2.